We begin with the raw amino-acid sequence, 850 residues long: Protein stoned-A (850 aa).

The span at 1–16 (MLKLPKGLKKKKKKSK) shows a compositional bias: basic residues. Disordered stretches follow at residues 1 to 95 (MLKL…AAGG) and 125 to 164 (KESFYQRLPSAAEKKKQKEEEAARLEAEQQEREKQRLGQI). Positions 26-290 (ELEQYKRDLK…QNLLLSESIE (265 aa)) are interaction with Syt. The segment covering 28-38 (EQYKRDLKAKQ) has biased composition (basic and acidic residues). The segment covering 78 to 91 (ILNAQQQLSDQNQG) has biased composition (polar residues). The segment covering 136 to 164 (AEKKKQKEEEAARLEAEQQEREKQRLGQI) has biased composition (basic and acidic residues). The DPF 1 motif lies at 224–226 (DPF). Disordered regions lie at residues 345 to 375 (EEEELEQKGRENQLLNPDLSEFDSLKDEEDD) and 412 to 498 (GSWA…PPFL). Pro residues predominate over residues 431–440 (PPPPVRPPTG). The span at 451-462 (SEDEEENPEDDP) shows a compositional bias: acidic residues. 2 consecutive short sequence motifs (DPF) follow at residues 461–463 (DPF) and 535–537 (DPF). Disordered regions lie at residues 573–610 (HSLSDQDFDPRADQKEPAAPQVKLEQKETDFDTAQRKS), 634–673 (GNELGASKKPLTPYYAPSDNRLQEREREAEDVDPFDTSHV), 738–760 (RKKLTNSGGSGKSEEDIDPFDTS), and 800–825 (LGLGDKVLTPSTHSRPSLPAQDIDPF). Composition is skewed to basic and acidic residues over residues 574 to 588 (SLSDQDFDPRADQKE) and 596 to 607 (LEQKETDFDTAQ). Short sequence motifs (DPF) lie at residues 666–668 (DPF), 755–757 (DPF), and 823–825 (DPF).

In terms of assembly, interacts with the second C2 domain of Syt.

The protein localises to the cytoplasm. The protein resides in the synapse. It is found in the cytoplasmic vesicle. It localises to the secretory vesicle. Its subcellular location is the synaptic vesicle. In terms of biological role, adapter protein involved in endocytic recycling of synaptic vesicles membranes. May act by mediating the retrieval of synaptotagmin protein Syt from the plasma membrane, thereby facilitating the internalization of multiple synaptic vesicles from the plasma membrane. This chain is Protein stoned-A (stnA), found in Drosophila melanogaster (Fruit fly).